The sequence spans 58 residues: Small ribosomal subunit protein bS21 (58 aa).

The tract at residues 30-58 (SEVRKREHYEKPSVKRKKKSEAARKRKFK) is disordered. The segment covering 31 to 42 (EVRKREHYEKPS) has biased composition (basic and acidic residues). The span at 43–58 (VKRKKKSEAARKRKFK) shows a compositional bias: basic residues.

It belongs to the bacterial ribosomal protein bS21 family.

The chain is Small ribosomal subunit protein bS21 from Clostridium perfringens (strain ATCC 13124 / DSM 756 / JCM 1290 / NCIMB 6125 / NCTC 8237 / Type A).